A 171-amino-acid polypeptide reads, in one-letter code: tRNA-specific adenosine deaminase (171 aa).

The CMP/dCMP-type deaminase domain maps to 6–133 (EEQTYFMQEA…ERLNHRVQVE (128 aa)). H57 serves as a coordination point for Zn(2+). The Proton donor role is filled by E59. Zn(2+) contacts are provided by C87 and C90.

It belongs to the cytidine and deoxycytidylate deaminase family. In terms of assembly, homodimer. Zn(2+) is required as a cofactor.

It carries out the reaction adenosine(34) in tRNA + H2O + H(+) = inosine(34) in tRNA + NH4(+). In terms of biological role, catalyzes the deamination of adenosine to inosine at the wobble position 34 of tRNA(Arg2). The chain is tRNA-specific adenosine deaminase from Streptococcus pyogenes serotype M1.